We begin with the raw amino-acid sequence, 68 residues long: Conotoxin Am6.8 (68 aa).

The N-terminal stretch at M1–A24 is a signal peptide. Residues V25–R45 constitute a propeptide that is removed on maturation. Q46 is subject to Pyrrolidone carboxylic acid. 3 disulfides stabilise this stretch: C47/C55, C50/C60, and C54/C65.

This sequence belongs to the conotoxin U superfamily. In terms of tissue distribution, expressed by the venom duct.

The protein resides in the secreted. Functionally, probable toxin. In Conus amadis (Amadis cone), this protein is Conotoxin Am6.8.